The chain runs to 131 residues: Peptidyl-prolyl cis-trans isomerase NIMA-interacting 4 (131 aa).

The interval methionine 1 to aspartate 25 is necessary for nuclear localization and DNA-binding. The segment at methionine 1–lysine 39 is disordered. The segment at methionine 1–arginine 41 is necessary for association with the pre-rRNP complexes. Gly residues predominate over residues serine 7 to alanine 18. Serine 19 bears the Phosphoserine; by CK2 mark. Positions glycine 35–glycine 129 constitute a PpiC domain.

It belongs to the PpiC/parvulin rotamase family. PIN4 subfamily. In terms of assembly, found in pre-ribosomal ribonucleoprotein (pre-rRNP) complexes. In terms of processing, phosphorylated. Phosphorylation occurs both in the nucleus and the cytoplasm. Phosphorylation at Ser-19 does not affect its PPIase activity but is required for nuclear localization, and the dephosphorylation is a prerequisite for the binding to DNA. The unphosphorylated form associates with the pre-rRNP complexes in the nucleus.

Its subcellular location is the nucleus. It localises to the nucleolus. The protein resides in the cytoplasm. The protein localises to the cytoskeleton. It is found in the spindle. It carries out the reaction [protein]-peptidylproline (omega=180) = [protein]-peptidylproline (omega=0). In terms of biological role, involved as a ribosomal RNA processing factor in ribosome biogenesis. Binds to tightly bent AT-rich stretches of double-stranded DNA. This is Peptidyl-prolyl cis-trans isomerase NIMA-interacting 4 (Pin4) from Mus musculus (Mouse).